We begin with the raw amino-acid sequence, 204 residues long: ATP phosphoribosyltransferase (204 aa).

The protein belongs to the ATP phosphoribosyltransferase family. Short subfamily. In terms of assembly, heteromultimer composed of HisG and HisZ subunits.

Its subcellular location is the cytoplasm. It catalyses the reaction 1-(5-phospho-beta-D-ribosyl)-ATP + diphosphate = 5-phospho-alpha-D-ribose 1-diphosphate + ATP. The protein operates within amino-acid biosynthesis; L-histidine biosynthesis; L-histidine from 5-phospho-alpha-D-ribose 1-diphosphate: step 1/9. Functionally, catalyzes the condensation of ATP and 5-phosphoribose 1-diphosphate to form N'-(5'-phosphoribosyl)-ATP (PR-ATP). Has a crucial role in the pathway because the rate of histidine biosynthesis seems to be controlled primarily by regulation of HisG enzymatic activity. This is ATP phosphoribosyltransferase from Leptospira biflexa serovar Patoc (strain Patoc 1 / Ames).